The following is a 139-amino-acid chain: Small ribosomal subunit protein uS12 (139 aa).

Asp102 is modified (3-methylthioaspartic acid).

Belongs to the universal ribosomal protein uS12 family. Part of the 30S ribosomal subunit. Contacts proteins S8 and S17. May interact with IF1 in the 30S initiation complex.

Its function is as follows. With S4 and S5 plays an important role in translational accuracy. In terms of biological role, interacts with and stabilizes bases of the 16S rRNA that are involved in tRNA selection in the A site and with the mRNA backbone. Located at the interface of the 30S and 50S subunits, it traverses the body of the 30S subunit contacting proteins on the other side and probably holding the rRNA structure together. The combined cluster of proteins S8, S12 and S17 appears to hold together the shoulder and platform of the 30S subunit. The polypeptide is Small ribosomal subunit protein uS12 (Mycoplasma capricolum subsp. capricolum (strain California kid / ATCC 27343 / NCTC 10154)).